We begin with the raw amino-acid sequence, 726 residues long: PTS system glucose-specific EIICBA component (726 aa).

The PTS EIIC type-1 domain maps to 1–453 (MMKDTFKNVL…FNYATPGRNG (453 aa)). Transmembrane regions (helical) follow at residues 18–38 (FGKA…MISI), 62–82 (IGWG…GGSW), 90–110 (AFAA…IFGV), 139–159 (VLEA…GFVG), 184–204 (FVPF…AAFW), 311–331 (FKVG…VAIY), 344–364 (GMMI…PIEY), 365–385 (MFMF…GAAF), and 419–439 (IVNF…IANF). One can recognise a PTS EIIB type-1 domain in the interval 473–555 (GSQAVNIINL…QDILDSGEII (83 aa)). The active-site Phosphocysteine intermediate; for EIIB activity is Cys495. Residues 596-700 (DPVFAQKMMG…ETSTVVVFTN (105 aa)) enclose the PTS EIIA type-1 domain. Residue His648 is the Tele-phosphohistidine intermediate; for EIIA activity of the active site.

It is found in the cell membrane. It catalyses the reaction N(pros)-phospho-L-histidyl-[protein] + D-glucose(out) = D-glucose 6-phosphate(in) + L-histidyl-[protein]. The phosphoenolpyruvate-dependent sugar phosphotransferase system (sugar PTS), a major carbohydrate active transport system, catalyzes the phosphorylation of incoming sugar substrates concomitantly with their translocation across the cell membrane. This system is involved in glucose transport. This Streptococcus pneumoniae serotype 4 (strain ATCC BAA-334 / TIGR4) protein is PTS system glucose-specific EIICBA component (exp5).